The chain runs to 339 residues: Annexin A2 (339 aa).

The residue at position 2 (Ser2) is an N-acetylserine. The S100A10-binding site stretch occupies residues 2 to 24; that stretch reads STVHEILCKLSLEGDHSTPPSAY. Tyr24 is subject to Phosphotyrosine; by SRC. Ser26 is modified (phosphoserine; by PKC). Annexin repeat units lie at residues 33–104 and 105–176; these read FDAE…GLLK and TPAQ…ALAK. An N6-acetyllysine; alternate modification is found at Lys49. Residue Lys49 forms a Glycyl lysine isopeptide (Lys-Gly) (interchain with G-Cter in SUMO1); alternate linkage. Lys49 participates in a covalent cross-link: Glycyl lysine isopeptide (Lys-Gly) (interchain with G-Cter in SUMO2); alternate. Lys152 carries the post-translational modification N6-acetyllysine. The residue at position 184 (Ser184) is a Phosphoserine. 2 Annexin repeats span residues 189-261 and 265-336; these read ELID…NLVQ and NKPL…YLCG. The residue at position 199 (Tyr199) is a Phosphotyrosine. Lys227 bears the N6-acetyllysine mark.

Belongs to the annexin family. Heterotetramer containing 2 light chains of S100A10/p11 and 2 heavy chains of ANXA2/p36. Interacts with ATP1B1. Interacts with DYSF. Interacts with COCH. Interacts (via repeat Annexin 1) with PCSK9 (via the C-terminal domain); the interaction inhibits the degradation of LDLR. Interacts with CEACAM1 (via the cytoplasmic domain); this interaction is regulated by phosphorylation of CEACAM1. Interacts with APPL2 and APPL1; targets APPL2 to endosomes and acting in parallel to RAB5A. Interacts with S100A4. May interact with UBAP2. Interacts with PLEKHG4B; this interaction is required for PLEKHG4B localization to cell-cell adhesions. ISGylated.

It localises to the secreted. The protein resides in the extracellular space. Its subcellular location is the extracellular matrix. It is found in the basement membrane. Calcium-regulated membrane-binding protein whose affinity for calcium is greatly enhanced by anionic phospholipids. It binds two calcium ions with high affinity. May be involved in heat-stress response. Inhibits PCSK9-enhanced LDLR degradation, probably reduces PCSK9 protein levels via a translational mechanism but also competes with LDLR for binding with PCSK9. Binds to endosomes damaged by phagocytosis of particulate wear debris and participates in endosomal membrane stabilization, thereby limiting NLRP3 inflammasome activation. Required for endothelial cell surface plasmin generation and may support fibrinolytic surveillance and neoangiogenesis. The sequence is that of Annexin A2 (ANXA2) from Canis lupus familiaris (Dog).